Consider the following 192-residue polypeptide: Putative molybdenum cofactor guanylyltransferase (192 aa).

Residues 8–10, Lys-21, Asp-67, and Asp-101 each bind GTP; that span reads LAG. Asp-101 is a binding site for Mg(2+).

Belongs to the MobA family. As to quaternary structure, monomer. Requires Mg(2+) as cofactor.

The protein localises to the cytoplasm. The enzyme catalyses Mo-molybdopterin + GTP + H(+) = Mo-molybdopterin guanine dinucleotide + diphosphate. In terms of biological role, transfers a GMP moiety from GTP to Mo-molybdopterin (Mo-MPT) cofactor (Moco or molybdenum cofactor) to form Mo-molybdopterin guanine dinucleotide (Mo-MGD) cofactor. The sequence is that of Putative molybdenum cofactor guanylyltransferase from Neisseria meningitidis serogroup B (strain ATCC BAA-335 / MC58).